The chain runs to 1905 residues: Low-density lipoprotein receptor-related protein 4 (1905 aa).

Residues Met-1–Ala-20 form the signal peptide. Residues Ser-21–His-1723 lie on the Extracellular side of the membrane. LDL-receptor class A domains are found at residues Ala-26–Thr-67, Thr-70–Pro-106, Glu-109–Asp-144, Lys-147–Pro-183, Pro-190–Ser-226, Pro-230–Thr-266, Met-269–Glu-305, and Gln-311–Arg-350. Disulfide bonds link Cys-27–Cys-44, Cys-34–Cys-57, Cys-51–Cys-66, Cys-71–Cys-83, Cys-78–Cys-96, Cys-90–Cys-105, Cys-110–Cys-122, Cys-117–Cys-135, Cys-129–Cys-143, Cys-148–Cys-160, Cys-155–Cys-173, Cys-167–Cys-182, Cys-191–Cys-203, Cys-198–Cys-216, Cys-210–Cys-225, Cys-231–Cys-243, Cys-238–Cys-256, Cys-250–Cys-265, Cys-270–Cys-282, Cys-277–Cys-295, Cys-289–Cys-304, Cys-312–Cys-324, Cys-319–Cys-337, Cys-331–Cys-349, Cys-358–Cys-369, Cys-365–Cys-378, Cys-380–Cys-393, Cys-399–Cys-409, Cys-405–Cys-418, and Cys-420–Cys-433. An N-linked (GlcNAc...) asparagine glycan is attached at Asn-264. The 41-residue stretch at Gly-354–Gln-394 folds into the EGF-like 1; atypical domain. Positions Asp-395–Lys-434 constitute an EGF-like 2; calcium-binding domain. LDL-receptor class B repeat units lie at residues Glu-480–His-522, Asp-523–Glu-565, Gly-566–Gly-609, Arg-610–Ser-652, and Leu-653–Gln-693. The N-linked (GlcNAc...) asparagine glycan is linked to Asn-498. The EGF-like 3 domain occupies Gly-698–Ala-737. 3 disulfides stabilise this stretch: Cys-702–Cys-713, Cys-709–Cys-722, and Cys-724–Cys-736. N-linked (GlcNAc...) asparagine glycosylation is present at Asn-719. LDL-receptor class B repeat units lie at residues Asp-785–Thr-827, Asn-828–Gly-870, Gly-871–Ser-914, Gln-915–Gln-956, and Arg-957–Gln-998. The N-linked (GlcNAc...) asparagine glycan is linked to Asn-901. Asn-1077 carries an N-linked (GlcNAc...) asparagine glycan. 10 LDL-receptor class B repeats span residues Gly-1093–Gly-1135, Arg-1136–Met-1178, Gly-1179–Ser-1222, Ser-1223–Ser-1263, Tyr-1264–Gln-1306, Gly-1397–Ala-1439, Arg-1440–Lys-1482, Gly-1483–Thr-1526, Arg-1527–Trp-1568, and Ile-1569–Arg-1610. Residues Asn-1415 and Asn-1467 are each glycosylated (N-linked (GlcNAc...) asparagine). The interval Pro-1659–Arg-1696 is disordered. Over residues Leu-1671–Pro-1690 the composition is skewed to low complexity. Residues Val-1724 to Leu-1746 traverse the membrane as a helical segment. The Cytoplasmic portion of the chain corresponds to Tyr-1747 to Val-1905. The interval Ser-1853–Val-1905 is disordered. Residues Glu-1872–Thr-1881 show a composition bias toward polar residues. The segment covering Pro-1882–Val-1905 has biased composition (basic and acidic residues).

Belongs to the LDLR family. As to quaternary structure, homooligomer. Interacts with MUSK; the heterodimer forms an AGRIN receptor complex that binds AGRIN resulting in activation of MUSK. Interacts (via the extracellular domain) with SOST; the interaction facilitates the inhibition of Wnt signaling. Interacts with MESD; the interaction promotes glycosylation of LRP4 and its cell-surface expression. Post-translationally, N-glycosylation is required for cell surface location. Expressed in different regions of the brain, mainly in the olfactory bulb, at lower level in the cerebral cortex and hippocampus.

It localises to the cell membrane. In terms of biological role, mediates SOST-dependent inhibition of bone formation. Functions as a specific facilitator of SOST-mediated inhibition of Wnt signaling. Plays a key role in the formation and the maintenance of the neuromuscular junction (NMJ), the synapse between motor neuron and skeletal muscle. Directly binds AGRIN and recruits it to the MUSK signaling complex. Mediates the AGRIN-induced phosphorylation of MUSK, the kinase of the complex. The activation of MUSK in myotubes induces the formation of NMJ by regulating different processes including the transcription of specific genes and the clustering of AChR in the postsynaptic membrane. Alternatively, may be involved in the negative regulation of the canonical Wnt signaling pathway, being able to antagonize the LRP6-mediated activation of this pathway. More generally, has been proposed to function as a cell surface endocytic receptor binding and internalizing extracellular ligands for degradation by lysosomes. Plays an essential role in the process of digit differentiation. This is Low-density lipoprotein receptor-related protein 4 (Lrp4) from Rattus norvegicus (Rat).